A 202-amino-acid chain; its full sequence is LexA repressor (202 aa).

A DNA-binding region (H-T-H motif) is located at residues 28–48 (RAEIAQRLGFRSPNAAEEHLK). Residues Ser-119 and Lys-156 each act as for autocatalytic cleavage activity in the active site.

This sequence belongs to the peptidase S24 family. Homodimer.

It catalyses the reaction Hydrolysis of Ala-|-Gly bond in repressor LexA.. Its function is as follows. Represses a number of genes involved in the response to DNA damage (SOS response), including recA and lexA. Binds to the 16 bp palindromic sequence 5'-CTGTATATATATACAG-3'. In the presence of single-stranded DNA, RecA interacts with LexA causing an autocatalytic cleavage which disrupts the DNA-binding part of LexA, leading to derepression of the SOS regulon and eventually DNA repair. The polypeptide is LexA repressor (Enterobacter sp. (strain 638)).